A 306-amino-acid polypeptide reads, in one-letter code: Pre-mRNA-splicing factor cwf26 (306 aa).

Residues Lys-130–Ser-152 are disordered. Positions Lys-130–Val-198 form a coiled coil.

This sequence belongs to the CWC26 family. Belongs to the 40S cdc5-associated complex (or cwf complex), a spliceosome sub-complex reminiscent of a late-stage spliceosome composed of the U2, U5 and U6 snRNAs and at least brr2, cdc5, cwf2/prp3, cwf3/syf1, cwf4/syf3, cwf5/ecm2, spp42/cwf6, cwf7/spf27, cwf8, cwf9, cwf10, cwf11, cwf12, prp45/cwf13, cwf14, cwf15, cwf16, cwf17, cwf18, cwf19, cwf20, cwf21, cwf22, cwf23, cwf24, cwf25, cwf26, cyp7/cwf27, cwf28, cwf29/ist3, lea1, msl1, prp5/cwf1, prp10, prp12/sap130, prp17, prp22, sap61, sap62, sap114, sap145, slu7, smb1, smd1, smd3, smf1, smg1 and syf2.

The protein localises to the cytoplasm. The protein resides in the nucleus. Its function is as follows. Involved in mRNA splicing. This Schizosaccharomyces pombe (strain 972 / ATCC 24843) (Fission yeast) protein is Pre-mRNA-splicing factor cwf26 (cwf26).